A 596-amino-acid chain; its full sequence is Arginine--tRNA ligase (596 aa).

The short motif at 139 to 149 is the 'HIGH' region element; that stretch reads ANPTGPLHVGH.

Belongs to the class-I aminoacyl-tRNA synthetase family. As to quaternary structure, monomer.

It localises to the cytoplasm. The catalysed reaction is tRNA(Arg) + L-arginine + ATP = L-arginyl-tRNA(Arg) + AMP + diphosphate. In Paraburkholderia phytofirmans (strain DSM 17436 / LMG 22146 / PsJN) (Burkholderia phytofirmans), this protein is Arginine--tRNA ligase.